Reading from the N-terminus, the 459-residue chain is uncharacterized protein (459 aa).

The TRAM domain occupies 5–63 (PVEEGQKFPLTIRRMGINGEGIGYFKKAVVFVPGAITGEEVVVEAVKVRDRFTEAKLNK). 4 residues coordinate [4Fe-4S] cluster: C76, C82, C85, and C166. S-adenosyl-L-methionine-binding residues include Q290, Y319, D340, and D388. C415 (nucleophile) is an active-site residue.

Belongs to the class I-like SAM-binding methyltransferase superfamily. RNA M5U methyltransferase family.

This is an uncharacterized protein from Listeria monocytogenes serotype 4b (strain F2365).